Here is a 164-residue protein sequence, read N- to C-terminus: Glycine cleavage system H protein, mitochondrial (164 aa).

The transit peptide at 1–39 (MAWLVLRRLGPVLAPRCPRLSLRPQVPAVRRLGTGSLLL) directs the protein to the mitochondrion. One can recognise a Lipoyl-binding domain in the interval 57-139 (IGTVGISNFA…YQDGWLIKMT (83 aa)). Lysine 98 bears the N6-lipoyllysine mark.

Belongs to the GcvH family. As to quaternary structure, the glycine cleavage system is composed of four proteins: P (GLDC), T (GCST), L (DLD) and H (GCSH). Interacts with GLDC. (R)-lipoate is required as a cofactor.

The protein localises to the mitochondrion. The glycine cleavage system catalyzes the degradation of glycine. The H protein (GCSH) shuttles the methylamine group of glycine from the P protein (GLDC) to the T protein (GCST). Has a pivotal role in the lipoylation of enzymes involved in cellular energetics such as the mitochondrial dihydrolipoyllysine-residue acetyltransferase component of pyruvate dehydrogenase complex (DLAT), and the mitochondrial dihydrolipoyllysine-residue succinyltransferase component of 2-oxoglutarate dehydrogenase complex (DLST). This chain is Glycine cleavage system H protein, mitochondrial, found in Gallus gallus (Chicken).